The chain runs to 99 residues: MICOS complex subunit MIC10 (99 aa).

A run of 2 helical transmembrane segments spans residues 27-43 (RFVY…LLFF) and 50-66 (WASI…SAYT).

It belongs to the MICOS complex subunit Mic10 family. Component of the mitochondrial contact site and cristae organizing system (MICOS) complex. The MICOS complex associates with mitochondrial outer membrane proteins. Present in a large lipid-enriched complex called mitochondrial transmembrane lipoprotein (MTL) complex made of proteins located in the two mitochondrial membranes, including the TOM complex and the core components of the MICOS complex and containing at least digalactosyldiacylglycerol (DGDG).

Its subcellular location is the mitochondrion inner membrane. Functionally, component of the MICOS complex, a large protein complex of the mitochondrial inner membrane that plays crucial roles in the maintenance of crista junctions, inner membrane architecture, and formation of contact sites to the outer membrane. This Arabidopsis thaliana (Mouse-ear cress) protein is MICOS complex subunit MIC10.